Consider the following 295-residue polypeptide: MLEKQNSEENIELLRAMRYCYNKSKIFYAVRISISILIPILSISIYLFNRGSTGTSNTGVWFSVIGSIWLLIAYQIEKLEGGYIEKGAKIQEKFDINLFNIRWNNVLVGNQISPEDIRDFSSKFKGDEEKLKNWYGGLSSKHFYVNVILAQRSNLMWAISLKRNFSILLFTVSVLYLFLTIAFGFFVNMSMQEYIIKILLPSMSILIYGFKTSDELKKQSNKLEALGNSIISKFDTGNLSEINASACREYQDAIFVYNRIRSILIPEWLYWLRQQKDDEKMIQINIRLTKKSNLF.

Transmembrane regions (helical) follow at residues isoleucine 26 to tyrosine 46, serine 56 to isoleucine 76, isoleucine 167 to valine 187, and serine 190 to phenylalanine 210.

The protein localises to the cell membrane. Its function is as follows. Effector protein of a CBASS antiviral system. CBASS (cyclic oligonucleotide-based antiphage signaling system) provides immunity against bacteriophage. The CD-NTase protein synthesizes cyclic nucleotides in response to infection; these serve as specific second messenger signals. The signals activate a diverse range of effectors, leading to bacterial cell death and thus abortive phage infection. A type I-B CBASS system. Functionally, protects B.subtilis against phage infection. When IK1_05630 and IK1_05631 are introduced in B.subtilis BEST7003 there is 1000-fold protection against phage SBSphiC. Both genes are required for protection. Activation leads to bacterial cell lysis and death, which occurs before the phage has finished its replication cycle, thus protecting non-infected bacteria by aborting the phage infection and preventing its propagation. The polypeptide is Probable CBASS effector molecule IK1_05631 (Bacillus cereus (strain VD146)).